The sequence spans 493 residues: Accumulates dyads protein 4 (493 aa).

Interacts with CNM67, SPO21/MPC70 and NUD1.

The protein resides in the cytoplasm. It localises to the cytoskeleton. It is found in the microtubule organizing center. The protein localises to the spindle pole body. Involved in the pathway that organizes the shaping and sizing of the prospore membrane (PSM) during sporulation. May be required to stabilize the outer plaque of the spindle pole body (SPB). This is Accumulates dyads protein 4 (ADY4) from Saccharomyces cerevisiae (strain ATCC 204508 / S288c) (Baker's yeast).